Reading from the N-terminus, the 442-residue chain is D-galactonate dehydratase family member SSBG_02010 (442 aa).

Aspartate 246 lines the Mg(2+) pocket. Histidine 248 is a binding site for D-arabinonate. 2 residues coordinate Mg(2+): glutamate 272 and glutamate 298. Residues glutamate 298, arginine 319, histidine 348, and glutamate 375 each contribute to the D-arabinonate site.

It belongs to the mandelate racemase/muconate lactonizing enzyme family. GalD subfamily.

In terms of biological role, has no detectable activity with D-mannonate and with a panel of 70 other acid sugars (in vitro), in spite of the conservation of the residues that are expected to be important for catalytic activity and cofactor binding. May have evolved a divergent function. In Streptomyces sp. (strain SPB074), this protein is D-galactonate dehydratase family member SSBG_02010.